The primary structure comprises 122 residues: Zein-alpha B49 (122 aa).

This sequence belongs to the zein family.

Its function is as follows. Zeins are major seed storage proteins. This chain is Zein-alpha B49, found in Zea mays (Maize).